We begin with the raw amino-acid sequence, 284 residues long: Rhomboid-type serine protease 2 (284 aa).

The next 6 helical transmembrane spans lie at 17 to 37, 66 to 86, 98 to 118, 124 to 141, 160 to 180, and 182 to 202; these read PPAL…IKSV, FHVN…PLAV, VTLN…GLIF, VIGL…MAYH, IKLY…ILFP, and SSLP…YGYI. Residue S128 is the Nucleophile of the active site. H187 is an active-site residue.

This sequence belongs to the peptidase S54 family.

It is found in the golgi apparatus membrane. The protein resides in the golgi apparatus. It localises to the cis-Golgi network membrane. The enzyme catalyses Cleaves type-1 transmembrane domains using a catalytic dyad composed of serine and histidine that are contributed by different transmembrane domains.. Functionally, probable rhomboid-type serine protease that catalyzes intramembrane proteolysis. The chain is Rhomboid-type serine protease 2 (RBD2) from Candida albicans (strain SC5314 / ATCC MYA-2876) (Yeast).